The sequence spans 430 residues: Small ribosomal subunit protein uS5m (430 aa).

Residues 218 to 282 form the S5 DRBM domain; sequence FDTRILEVRN…NRAVHHLHYI (65 aa).

Belongs to the universal ribosomal protein uS5 family. In terms of assembly, component of the mitochondrial small ribosomal subunit (mt-SSU). Mature mammalian 55S mitochondrial ribosomes consist of a small (28S) and a large (39S) subunit. The 28S small subunit contains a 12S ribosomal RNA (12S mt-rRNA) and 30 different proteins. The 39S large subunit contains a 16S rRNA (16S mt-rRNA), a copy of mitochondrial valine transfer RNA (mt-tRNA(Val)), which plays an integral structural role, and 52 different proteins.

The protein resides in the mitochondrion. The sequence is that of Small ribosomal subunit protein uS5m (MRPS5) from Homo sapiens (Human).